The sequence spans 420 residues: 3-oxo-tetronate kinase (420 aa).

ATP is bound by residues S258, 360–363, and G403; that span reads GGET.

It belongs to the four-carbon acid sugar kinase family.

The enzyme catalyses 3-dehydro-L-erythronate + ATP = 3-dehydro-4-O-phospho-L-erythronate + ADP + H(+). It carries out the reaction 3-dehydro-D-erythronate + ATP = 3-dehydro-4-O-phospho-D-erythronate + ADP + H(+). Functionally, catalyzes the ATP-dependent phosphorylation of 3-oxo-tetronate to 3-oxo-tetronate 4-phosphate. The chain is 3-oxo-tetronate kinase from Salmonella typhimurium (strain LT2 / SGSC1412 / ATCC 700720).